A 262-amino-acid chain; its full sequence is MIRASDISVRLAGRQVLHGISLDAAPGAMTAIVGPNGSGKTTTLKAISGELTPSAGKVTINGRDIASLKPWELALKRGVLPQSTVISFPFTVREIVRLGLMANGGEASAHGRIADQALEAVDLAGFSGRFYQELSGGEQQRVQLARVLCQISAPVAAGEPRYLLLDEPVSSLDIRHQLTIMRLARQFCADGGGVVAVMHDLNLTSMFADQIVMMKAGRIRARGAPKDVLTDETMEAVFGCRMRVSVAPAHDIPFVLPQSATM.

The ABC transporter domain occupies 2 to 241; that stretch reads IRASDISVRL…ETMEAVFGCR (240 aa). ATP is bound at residue 34–41; that stretch reads GPNGSGKT.

This sequence belongs to the ABC transporter superfamily. Heme (hemin) importer (TC 3.A.1.14.5) family. The complex is composed of two ATP-binding proteins (HmuV), two transmembrane proteins (HmuU) and a solute-binding protein (HmuT).

The protein localises to the cell inner membrane. Part of the ABC transporter complex HmuTUV involved in hemin import. Responsible for energy coupling to the transport system. This chain is Hemin import ATP-binding protein HmuV, found in Rhizobium meliloti (strain 1021) (Ensifer meliloti).